The following is a 259-amino-acid chain: Imidazole glycerol phosphate synthase subunit HisF (259 aa).

Residues aspartate 11 and aspartate 130 contribute to the active site.

Belongs to the HisA/HisF family. As to quaternary structure, heterodimer of HisH and HisF.

The protein resides in the cytoplasm. The enzyme catalyses 5-[(5-phospho-1-deoxy-D-ribulos-1-ylimino)methylamino]-1-(5-phospho-beta-D-ribosyl)imidazole-4-carboxamide + L-glutamine = D-erythro-1-(imidazol-4-yl)glycerol 3-phosphate + 5-amino-1-(5-phospho-beta-D-ribosyl)imidazole-4-carboxamide + L-glutamate + H(+). The protein operates within amino-acid biosynthesis; L-histidine biosynthesis; L-histidine from 5-phospho-alpha-D-ribose 1-diphosphate: step 5/9. IGPS catalyzes the conversion of PRFAR and glutamine to IGP, AICAR and glutamate. The HisF subunit catalyzes the cyclization activity that produces IGP and AICAR from PRFAR using the ammonia provided by the HisH subunit. This is Imidazole glycerol phosphate synthase subunit HisF from Nitratidesulfovibrio vulgaris (strain DP4) (Desulfovibrio vulgaris).